The primary structure comprises 205 residues: Thymidine kinase (205 aa).

Residues 9-16 and 87-90 each bind ATP; these read SAMNAGKS and DECQ. The active-site Proton acceptor is E88. The Zn(2+) site is built by C145, C147, C182, and H185.

This sequence belongs to the thymidine kinase family. In terms of assembly, homotetramer.

The protein localises to the cytoplasm. The catalysed reaction is thymidine + ATP = dTMP + ADP + H(+). Allosteric enzyme which is feedback inhibited by dTTP and activated by a number of dNDP and dNTP. Functionally, phosphorylates both thymidine and deoxyuridine. This is Thymidine kinase from Escherichia coli (strain K12).